Here is a 521-residue protein sequence, read N- to C-terminus: Nitrogenase molybdenum-iron protein beta chain (521 aa).

Cysteine 77, cysteine 102, and cysteine 159 together coordinate [8Fe-7S] cluster.

Belongs to the NifD/NifK/NifE/NifN family. Tetramer of two alpha and two beta chains. Forms complex with the iron protein (nitrogenase component 2). The cofactor is [8Fe-7S] cluster.

It carries out the reaction N2 + 8 reduced [2Fe-2S]-[ferredoxin] + 16 ATP + 16 H2O = H2 + 8 oxidized [2Fe-2S]-[ferredoxin] + 2 NH4(+) + 16 ADP + 16 phosphate + 6 H(+). Functionally, this molybdenum-iron protein is part of the nitrogenase complex that catalyzes the key enzymatic reactions in nitrogen fixation. This Azospirillum brasilense protein is Nitrogenase molybdenum-iron protein beta chain (nifK).